Reading from the N-terminus, the 1249-residue chain is MSSMWSEYTIGGVKIYFPYKAYPSQLAMMNSILRGLNSKQHCLLESPTGSGKSLALLCSALAWQQSLSGKPADEGVSEKAEVQLSCCCACHSKDFTNNDMNQGTSRHFNYPSTPPSERNGTSSTCQDSPEKTTLAAKLSAKKQASIYRDENDDFQVEKKRIRPLETTQQIRKRHCFGTEVHNLDAKVDSGKTVKLNSPLEKINSFSPQKPPGHCSRCCCSTKQGNSQESSNTIKKDHTGKSKIPKIYFGTRTHKQIAQITRELRRTAYSGVPMTILSSRDHTCVHPEVVGNFNRNEKCMELLDGKNGKSCYFYHGVHKISDQHTLQTFQGMCKAWDIEELVSLGKKLKACPYYTARELIQDADIIFCPYNYLLDAQIRESMDLNLKEQVVILDEAHNIEDCARESASYSVTEVQLRFARDELDSMVNNNIRKKDHEPLRAVCCSLINWLEANAEYLVERDYESACKIWSGNEMLLTLHKMGITTATFPILQGHFSAVLQKEEKISPIYGKEEAREVPVISASTQIMLKGLFMVLDYLFRQNSRFADDYKIAIQQTYSWTNQIDISDKNGLLVLPKNKKRSRQKTAVHVLNFWCLNPAVAFSDINGKVQTIVLTSGTLSPMKSFSSELGVTFTIQLEANHIIKNSQVWVGTIGSGPKGRNLCATFQNTETFEFQDEVGALLLSVCQTVSQGILCFLPSYKLLEKLKERWLSTGLWHNLELVKTVIVEPQGGEKTNFDELLQVYYDAIKYKGEKDGALLVAVCRGKVSEGLDFSDDNARAVITIGIPFPNVKDLQVELKRQYNDHHSKLRGLLPGRQWYEIQAYRALNQALGRCIRHRNDWGALILVDDRFRNNPSRYISGLSKWVRQQIQHHSTFESALESLAEFSKKHQKVLNVSIKDRTNIQDNESTLEVTSLKYSTSPYLLEAASHLSPENFVEDEAKICVQELQCPKIITKNSPLPSSIISRKEKNDPVFLEEAGKAEKIVISRSTSPTFNKQTKRVSWSSFNSLGQYFTGKIPKATPELGSSENSASSPPRFKTEKMESKTVLPFTDKCESSNLTVNTSFGSCPQSETIISSLKIDATLTRKNHSEHPLCSEEALDPDIELSLVSEEDKQSTSNRDFETEAEDESIYFTPELYDPEDTDEEKNDLAETDRGNRLANNSDCILAKDLFEIRTIKEVDSAREVKAEDCIDTKLNGILHIEESKIDDIDGNVKTTWINELELGKTHEIEIKNFKPSPSKNKGMFPGFK.

The Helicase ATP-binding domain occupies 11–442 (GGVKIYFPYK…KDHEPLRAVC (432 aa)). Over residues 102 to 127 (QGTSRHFNYPSTPPSERNGTSSTCQD) the composition is skewed to polar residues. The disordered stretch occupies residues 102–131 (QGTSRHFNYPSTPPSERNGTSSTCQDSPEK). Residues 158-175 (KKRIRPLETTQQIRKRHC) carry the Nuclear localization signal motif. ATP is bound at residue 185–192 (AKVDSGKT). Residues C283, C298, C310, and C350 each coordinate [4Fe-4S] cluster. The DEAH box motif lies at 393 to 396 (DEAH). Phosphoserine occurs at positions 505, 927, 930, 956, 990, 1004, and 1032. The interval 888–1063 (HQKVLNVSIK…ESSNLTVNTS (176 aa)) is interaction with BRCA1. 2 disordered regions span residues 1018-1042 (KATPELGSSENSASSPPRFKTEKME) and 1108-1127 (VSEEDKQSTSNRDFETEAED). Over residues 1023–1032 (LGSSENSASS) the composition is skewed to polar residues. The segment covering 1110 to 1122 (EEDKQSTSNRDFE) has biased composition (basic and acidic residues). A Phosphoserine modification is found at S1237. K1249 carries the post-translational modification N6-acetyllysine.

This sequence belongs to the DEAD box helicase family. DEAH subfamily. As to quaternary structure, interacts with the replication protein A complex (RPA) via the RPA1 subunit; following DNA damage they colocalize in foci in the nucleus. Binds directly to the BRCT domains of BRCA1. Interacts with the CIA complex components CIAO1, CIAO2B and MMS19. [4Fe-4S] cluster serves as cofactor. In terms of processing, phosphorylated. Phosphorylation is necessary for interaction with BRCA1, and is cell-cycle regulated. Post-translationally, acetylation at Lys-1249 facilitates DNA end processing required for repair and checkpoint signaling. As to expression, ubiquitously expressed, with highest levels in testis.

The protein resides in the nucleus. It is found in the cytoplasm. The enzyme catalyses Couples ATP hydrolysis with the unwinding of duplex DNA at the replication fork by translocating in the 5'-3' direction. This creates two antiparallel DNA single strands (ssDNA). The leading ssDNA polymer is the template for DNA polymerase III holoenzyme which synthesizes a continuous strand.. The catalysed reaction is ATP + H2O = ADP + phosphate + H(+). Helicase activity on forked substrates is stimulated by replication protein A complex heterotrimer (RPA1, RPA2, RPA3). Helicase activity on G-quadruplex DNA is stimulated 3-fold by RPA, and inhibited by MSH2/MSH6. Unwinding of G-quadruplex DNA is inhibited by ATP-gamma-S and telomestatin (TMS); TMA does not inhibit unwinding of forked-duplex DNA. Helicase activity on dsDNA and G-quadruplex DNA is inhibited by porphyrin derivatives meso-tetra (N-methyl-4-pyridyl) porphine tetra tosylate (T4) and N-methyl mesoporphyrin IX (NMM). DNA-dependent ATPase and 5'-3' DNA helicase required for the maintenance of chromosomal stability. Acts late in the Fanconi anemia pathway, after FANCD2 ubiquitination. Involved in the repair of DNA double-strand breaks by homologous recombination in a manner that depends on its association with BRCA1. Involved in the repair of abasic sites at replication forks by promoting the degradation of DNA-protein cross-links: acts by catalyzing unfolding of HMCES DNA-protein cross-link via its helicase activity, exposing the underlying DNA and enabling cleavage of the DNA-protein adduct by the SPRTN metalloprotease. Can unwind RNA:DNA substrates. Unwinds G-quadruplex DNA; unwinding requires a 5'-single stranded tail. The sequence is that of Fanconi anemia group J protein from Homo sapiens (Human).